A 73-amino-acid chain; its full sequence is Kazal peptide Pr13a (73 aa).

The signal sequence occupies residues 1-20 (MKYIILFLVLIGLQANLALG). Positions 21 to 73 (SKCKCDCTKYPYSPVCAKELKTGDTETFNNVCQLQCYNCTHMKNYVVIYSGSC) constitute a Kazal-like domain. Disulfide bonds link Cys23–Cys59, Cys27–Cys52, and Cys36–Cys73.

In terms of tissue distribution, expressed by the venom gland (anterior main gland) (at protein level).

The protein resides in the secreted. In terms of biological role, may act as a serine protease inhibitor, since it possess the kazal serine protease inhibitor signature. This Platymeris rhadamanthus (Red spot assassin bug) protein is Kazal peptide Pr13a.